The primary structure comprises 436 residues: UDP-N-acetylmuramate--L-alanine ligase (436 aa).

110–116 (GAHGKTS) contributes to the ATP binding site.

This sequence belongs to the MurCDEF family.

It is found in the cytoplasm. The enzyme catalyses UDP-N-acetyl-alpha-D-muramate + L-alanine + ATP = UDP-N-acetyl-alpha-D-muramoyl-L-alanine + ADP + phosphate + H(+). Its pathway is cell wall biogenesis; peptidoglycan biosynthesis. In terms of biological role, cell wall formation. The polypeptide is UDP-N-acetylmuramate--L-alanine ligase (Lacticaseibacillus paracasei (strain ATCC 334 / BCRC 17002 / CCUG 31169 / CIP 107868 / KCTC 3260 / NRRL B-441) (Lactobacillus paracasei)).